The following is a 348-amino-acid chain: 4-hydroxyphenylpyruvate dioxygenase (348 aa).

VOC domains are found at residues G11 to P141 and A151 to E303. Fe cation-binding residues include H154, H232, and E312.

This sequence belongs to the 4HPPD family. The cofactor is Fe cation.

It carries out the reaction 3-(4-hydroxyphenyl)pyruvate + O2 = homogentisate + CO2. Its function is as follows. Catalyzes the transformation of p-hydroxyphenylpyruvate into HGA. Has hemolytic and brown pigment production activity. The protein is 4-hydroxyphenylpyruvate dioxygenase (lly) of Legionella pneumophila subsp. pneumophila (strain Philadelphia 1 / ATCC 33152 / DSM 7513).